A 563-amino-acid chain; its full sequence is Inositol-3-phosphate synthase 1-A (563 aa).

It belongs to the myo-inositol 1-phosphate synthase family. Requires NAD(+) as cofactor.

The protein resides in the cytoplasm. It catalyses the reaction D-glucose 6-phosphate = 1D-myo-inositol 3-phosphate. Its pathway is polyol metabolism; myo-inositol biosynthesis; myo-inositol from D-glucose 6-phosphate: step 1/2. Its function is as follows. Key enzyme in myo-inositol biosynthesis pathway that catalyzes the conversion of glucose 6-phosphate to 1-myo-inositol 1-phosphate in a NAD-dependent manner. Rate-limiting enzyme in the synthesis of all inositol-containing compounds. This Xenopus laevis (African clawed frog) protein is Inositol-3-phosphate synthase 1-A (isyna1-a).